The sequence spans 31 residues: Photosystem I reaction center subunit XII (31 aa).

A helical membrane pass occupies residues 6 to 25; sequence TQILAALVVALLPAFLAFRL.

The protein belongs to the PsaM family.

It localises to the cellular thylakoid membrane. The chain is Photosystem I reaction center subunit XII from Synechocystis sp. (strain ATCC 27184 / PCC 6803 / Kazusa).